The primary structure comprises 484 residues: N-succinylglutamate 5-semialdehyde dehydrogenase (484 aa).

NAD(+) is bound at residue 221–226 (GSAAAG). Residues Glu-244 and Cys-278 contribute to the active site.

This sequence belongs to the aldehyde dehydrogenase family. AstD subfamily.

It carries out the reaction N-succinyl-L-glutamate 5-semialdehyde + NAD(+) + H2O = N-succinyl-L-glutamate + NADH + 2 H(+). The protein operates within amino-acid degradation; L-arginine degradation via AST pathway; L-glutamate and succinate from L-arginine: step 4/5. In terms of biological role, catalyzes the NAD-dependent reduction of succinylglutamate semialdehyde into succinylglutamate. The chain is N-succinylglutamate 5-semialdehyde dehydrogenase from Caulobacter sp. (strain K31).